The chain runs to 953 residues: Isoleucine--tRNA ligase (953 aa).

The 'HIGH' region signature appears at 58 to 68; that stretch reads PYANGNIHLGH. Glu565 contributes to the L-isoleucyl-5'-AMP binding site. Residues 606–610 carry the 'KMSKS' region motif; it reads KMSKS. Lys609 serves as a coordination point for ATP. The Zn(2+) site is built by Cys916, Cys919, Cys936, and Cys939.

This sequence belongs to the class-I aminoacyl-tRNA synthetase family. IleS type 1 subfamily. Monomer. It depends on Zn(2+) as a cofactor.

It is found in the cytoplasm. It carries out the reaction tRNA(Ile) + L-isoleucine + ATP = L-isoleucyl-tRNA(Ile) + AMP + diphosphate. Its function is as follows. Catalyzes the attachment of isoleucine to tRNA(Ile). As IleRS can inadvertently accommodate and process structurally similar amino acids such as valine, to avoid such errors it has two additional distinct tRNA(Ile)-dependent editing activities. One activity is designated as 'pretransfer' editing and involves the hydrolysis of activated Val-AMP. The other activity is designated 'posttransfer' editing and involves deacylation of mischarged Val-tRNA(Ile). The protein is Isoleucine--tRNA ligase of Colwellia psychrerythraea (strain 34H / ATCC BAA-681) (Vibrio psychroerythus).